Consider the following 822-residue polypeptide: MLEGTVDYDPLEDITNILFSKESLNNIDELISITRSYKKQLQEDILKEENELKEHPKNSAEIEASLRKVFQDFKETQDVSASTELTISNLTEGISYLDIAKKNLTHSLTLFQNLKILTDSYIQCNELLSQGSFKKMVSPYKIMCSLAENTFISYKSLDEINYLLSSISRLKGDTLSKIKQNYNALFSGGNISEHDTALTMELREGACELLDCDTSTRAQMIDWCLDKLLFEMKEIFRVDDEAGSLENLSRRYIYFKKILNNFNSKFADYFLKDWEMAVRLTTTFYHITHKDLQTLLKREFKDKNPSIDLFMTALQSTLDFEKYIDVRFSKKIKEPKLSSCFEPYLTLWVSHQNQMMEKKFLSYMSEPKYPSNETESLVLPSSADLFRTYRSVLTQTLELIDNNANDSILTSLANFFSRWLQTYSQKILLPLLLPDNIEVQDKLEAAKYTVLLINTADYCATTIDQLEDKLSEFSGNREKLANSFTKTKNIYDDLLAKGTSFLLNRVIPLDLNFVWREFINNDWSNAAIEDYSRYMVTLKSVLKMPALTDASIKQQQEQPSTLAFILSQFNRDVYKWNFLDKVIDIITTNFVSNTIRLLQPVPPFSLAGSKRKFETRTVVNIGEQLLLDLELLKEIFHTLPESVSNDSDLRENTSYKRVKRHADNNIDQLLKFIKLLMAPLDSADDYYETYSKLTNNNPDSAVWSFVLALKGIPWDLALWKKLWSAYNLETDDTDEGSRPDSNRDLFIFKWDKVLLGQFENNLARMQDPNWSKFVRQDLKISPPVMKRIVSTPQIQQQKEEQKKQSLSVKDFVSHSRFFNRGT.

Coiled coils occupy residues 34–58 and 460–484; these read TRSYKKQLQEDILKEENELKEHPKN and ATTIDQLEDKLSEFSGNREKLANSF.

It belongs to the VPS53 family. Component of the Golgi-associated retrograde protein (GARP) complex, also called VFT (VPS fifty-three) complex, composed of VPS51, VPS52, VPS53 and VPS54. Also interacts with TLG1, YPT6 and ARL1.

It localises to the golgi apparatus. The protein resides in the trans-Golgi network membrane. The protein localises to the endosome membrane. Functionally, involved in retrograde transport from early and late endosomes to late Golgi by linking the vesicle through the t-SNARE TGL1 to the Golgi, leading to the membrane fusion between late Golgi and endosomal vesicles. The polypeptide is Vacuolar protein sorting-associated protein 53 (VPS53) (Saccharomyces cerevisiae (strain ATCC 204508 / S288c) (Baker's yeast)).